We begin with the raw amino-acid sequence, 666 residues long: Putative L-type lectin-domain containing receptor kinase V.1 (666 aa).

Positions 1 to 18 (MVLLLFLVLFFVPESVVC) are cleaved as a signal peptide. The Extracellular portion of the chain corresponds to 19–289 (QRPNPNGVEF…WIQSPNGILT (271 aa)). Positions 27-257 (EFNTSGNMYT…SHYILGWTFK (231 aa)) are legume-lectin like. Residues Asn-29, Asn-74, Asn-123, Asn-176, Asn-204, and Asn-259 are each glycosylated (N-linked (GlcNAc...) asparagine). Residues 290-310 (ISLTVSGVIILIILSLSLWLF) traverse the membrane as a helical segment. Topologically, residues 311–666 (LKRKKLLEVL…FTESFVSHGR (356 aa)) are cytoplasmic. The region spanning 344 to 625 (FKDTEVLGKG…SVAQLPHNLL (282 aa)) is the Protein kinase domain. ATP contacts are provided by residues 350 to 358 (LGKGGFGKV) and Lys-373. The Proton acceptor role is filled by Asp-469.

The protein in the C-terminal section; belongs to the protein kinase superfamily. Ser/Thr protein kinase family. In the N-terminal section; belongs to the leguminous lectin family.

It localises to the cell membrane. It catalyses the reaction L-seryl-[protein] + ATP = O-phospho-L-seryl-[protein] + ADP + H(+). The catalysed reaction is L-threonyl-[protein] + ATP = O-phospho-L-threonyl-[protein] + ADP + H(+). In Arabidopsis thaliana (Mouse-ear cress), this protein is Putative L-type lectin-domain containing receptor kinase V.1 (LECRK51).